The following is a 412-amino-acid chain: CCA-adding enzyme (412 aa).

ATP-binding residues include Ser41 and Lys44. Ser41 and Lys44 together coordinate CTP. Mg(2+) contacts are provided by Asp53, Asp55, and Asp106. 3 residues coordinate ATP: His129, Lys149, and Tyr158. Residues His129, Lys149, and Tyr158 each contribute to the CTP site.

The protein belongs to the tRNA nucleotidyltransferase/poly(A) polymerase family. Archaeal CCA-adding enzyme subfamily. As to quaternary structure, homodimer. Forms a tetramer upon binding two tRNAs. However, tRNA-induced tetramer formation is not required for CCA addition. It depends on Mg(2+) as a cofactor.

The catalysed reaction is a tRNA precursor + 2 CTP + ATP = a tRNA with a 3' CCA end + 3 diphosphate. The enzyme catalyses a tRNA with a 3' CCA end + 2 CTP + ATP = a tRNA with a 3' CCACCA end + 3 diphosphate. Catalyzes the addition and repair of the essential 3'-terminal CCA sequence in tRNAs without using a nucleic acid template. Adds these three nucleotides in the order of C, C, and A to the tRNA nucleotide-73, using CTP and ATP as substrates and producing inorganic pyrophosphate. tRNA 3'-terminal CCA addition is required both for tRNA processing and repair. Also involved in tRNA surveillance by mediating tandem CCA addition to generate a CCACCA at the 3' terminus of unstable tRNAs. While stable tRNAs receive only 3'-terminal CCA, unstable tRNAs are marked with CCACCA and rapidly degraded. The structural flexibility of RNA controls the choice between CCA versus CCACCA addition: following the first CCA addition cycle, nucleotide-binding to the active site triggers a clockwise screw motion, producing torque on the RNA. This ejects stable RNAs, whereas unstable RNAs are refolded while bound to the enzyme and subjected to a second CCA catalytic cycle. This is CCA-adding enzyme from Saccharolobus shibatae (strain ATCC 51178 / DSM 5389 / JCM 8931 / NBRC 15437 / B12) (Sulfolobus shibatae).